The sequence spans 252 residues: Sulfate transporter CysZ (252 aa).

5 helical membrane-spanning segments follow: residues 29-49 (FVLLPLIANVLLVGGALFYIF), 66-86 (FLSWLSYILWPLLVLTVLATF), 141-160 (LVYILPKAIGLFLLLLIPAL), 164-186 (VAPFLWFIFTAWMLAIQYADYPF), and 212-232 (ALVSVFTTIPVLNLIVMPVAV).

It belongs to the CysZ family.

Its subcellular location is the cell inner membrane. High affinity, high specificity proton-dependent sulfate transporter, which mediates sulfate uptake. Provides the sulfur source for the cysteine synthesis pathway. In Vibrio atlanticus (strain LGP32) (Vibrio splendidus (strain Mel32)), this protein is Sulfate transporter CysZ.